A 1115-amino-acid polypeptide reads, in one-letter code: Scavenger receptor cysteine-rich type 1 protein M130 (1115 aa).

Residues 1–46 (MDKLRMVLHENSGSADFRRCSAHLSSFTFAVVAVLSACLVTSSLGG) form the signal peptide. The Extracellular segment spans residues 47 to 1044 (KDKELRLTGG…ESLHATGRSS (998 aa)). SRCR domains are found at residues 51 to 151 (LRLT…VTCS), 158 to 258 (MGLV…VICL), 265 to 365 (LRVV…VTCS), 372 to 472 (LRLK…ITCS), 477 to 577 (PRLV…VVCS), 582 to 682 (IRLV…VICS), 718 to 818 (LRLV…VICS), 823 to 925 (LRLI…ITCA), and 928 to 1028 (IRLQ…VTCS). Intrachain disulfides connect C76-C140, C89-C150, C120-C130, C183-C247, C196-C257, C227-C237, C290-C354, C303-C364, C334-C344, C397-C461, C410-C471, C441-C451, C502-C566, C515-C576, C546-C556, C607-C671, C620-C681, C651-C661, C743-C807, C756-C817, C787-C797, C863-C924, and C894-C904. Residue N105 is glycosylated (N-linked (GlcNAc...) asparagine). The N-linked (GlcNAc...) asparagine glycan is linked to N139. Residue N936 is glycosylated (N-linked (GlcNAc...) asparagine). 3 disulfide bridges follow: C953–C1017, C966–C1027, and C997–C1007. A helical membrane pass occupies residues 1045–1065 (FVALAIFGVILLACLIAFLIW). Topologically, residues 1066–1115 (TQKRRQRQRLSVFSGGENSVHQIQYREMNSCLKADETDMLNPSGDHSEVQ) are cytoplasmic. The Internalization signal signature appears at 1090 to 1093 (YREM).

As to quaternary structure, interacts with CSNK2B. A soluble form (sCD163) is produced by proteolytic shedding which can be induced by lipopolysaccharide, phorbol ester and Fc region of immunoglobulin gamma. This cleavage is dependent on protein kinase C and tyrosine kinases and can be blocked by protease inhibitors. The shedding is inhibited by the tissue inhibitor of metalloproteinase TIMP3, and thus probably induced by membrane-bound metalloproteinases ADAMs. Post-translationally, phosphorylated. Expressed in monocytes and macrophages. Detected only in one population of monocytes (CD163+) which is in advanced maturation stage.

It is found in the secreted. The protein localises to the cell membrane. Its function is as follows. Involved in clearance and endocytosis of hemoglobin/haptoglobin complexes by macrophages and may thereby protect tissues from free hemoglobin-mediated oxidative damage. May play a role in the uptake and recycling of iron, via endocytosis of hemoglobin/haptoglobin and subsequent breakdown of heme. Binds hemoglobin/haptoglobin complexes in a calcium-dependent and pH-dependent manner. Induces a cascade of intracellular signals that involves tyrosine kinase-dependent calcium mobilization, inositol triphosphate production and secretion of IL6 and CSF1. May play a role in the process of infection of porcine monocytes/macrophages by African swine fever virus (ASFV). In case of porcine reproductive and respiratory syndrome virus (PRRSV), serves mediates virion attachment and plays a role in viral entry. In terms of biological role, after shedding, the soluble form (sCD163) may play an anti-inflammatory role. In Sus scrofa (Pig), this protein is Scavenger receptor cysteine-rich type 1 protein M130 (CD163).